A 279-amino-acid polypeptide reads, in one-letter code: Coiled-coil domain-containing protein 106 (279 aa).

The stretch at 62-101 forms a coiled coil; sequence KAQLHMALERNSWLQKRIEDLEEERDFLRCQLDKFISSAR. Over residues 109 to 121 the composition is skewed to basic and acidic residues; the sequence is RMKPGPRRVDGDS. Residues 109 to 173 form a disordered region; that stretch reads RMKPGPRRVD…FGKTKARERQ (65 aa). Residue Ser-129 is modified to Phosphoserine. The Bipartite nuclear localization signal signature appears at 151–164; it reads KRQKQKGSTSRKRF. Basic residues predominate over residues 151–167; sequence KRQKQKGSTSRKRFGKT.

As to quaternary structure, interacts with p53/TP53.

The protein resides in the nucleus. Its function is as follows. Promotes the degradation of p53/TP53 protein and inhibits its transactivity. The chain is Coiled-coil domain-containing protein 106 (Ccdc106) from Mus musculus (Mouse).